A 178-amino-acid chain; its full sequence is Inorganic pyrophosphatase (178 aa).

Substrate contacts are provided by lysine 30, arginine 44, and tyrosine 56. Mg(2+)-binding residues include aspartate 66, aspartate 71, and aspartate 103. Tyrosine 140 is a substrate binding site.

Belongs to the PPase family. In terms of assembly, homohexamer. It depends on Mg(2+) as a cofactor.

It localises to the cytoplasm. It catalyses the reaction diphosphate + H2O = 2 phosphate + H(+). In terms of biological role, catalyzes the hydrolysis of inorganic pyrophosphate (PPi) forming two phosphate ions. The polypeptide is Inorganic pyrophosphatase (Pyrococcus abyssi (strain GE5 / Orsay)).